Here is a 204-residue protein sequence, read N- to C-terminus: Recombination protein RecR (204 aa).

A C4-type zinc finger spans residues 59-74 (CTRCNTFTELEICGTC). A Toprim domain is found at 82–181 (TLLCVVETPA…KVSRLARGVP (100 aa)).

Belongs to the RecR family.

May play a role in DNA repair. It seems to be involved in an RecBC-independent recombinational process of DNA repair. It may act with RecF and RecO. In Cupriavidus metallidurans (strain ATCC 43123 / DSM 2839 / NBRC 102507 / CH34) (Ralstonia metallidurans), this protein is Recombination protein RecR.